Here is a 406-residue protein sequence, read N- to C-terminus: Probable 26S proteasome regulatory subunit 10B (406 aa).

Residue 191-198 (GPPGTGKT) coordinates ATP.

Belongs to the AAA ATPase family.

The protein localises to the cytoplasm. Its subcellular location is the nucleus. The 26S proteasome is involved in the ATP-dependent degradation of ubiquitinated proteins. The regulatory (or ATPase) complex confers ATP dependency and substrate specificity to the 26S complex. The polypeptide is Probable 26S proteasome regulatory subunit 10B (rpt-4) (Caenorhabditis elegans).